The sequence spans 470 residues: UDP-N-acetylmuramate--L-alanine ligase (470 aa).

Residue 118-124 (GTHGKTT) coordinates ATP.

Belongs to the MurCDEF family.

Its subcellular location is the cytoplasm. It carries out the reaction UDP-N-acetyl-alpha-D-muramate + L-alanine + ATP = UDP-N-acetyl-alpha-D-muramoyl-L-alanine + ADP + phosphate + H(+). Its pathway is cell wall biogenesis; peptidoglycan biosynthesis. Cell wall formation. The sequence is that of UDP-N-acetylmuramate--L-alanine ligase from Cereibacter sphaeroides (strain ATCC 17025 / ATH 2.4.3) (Rhodobacter sphaeroides).